Consider the following 689-residue polypeptide: DNA ligase (689 aa).

NAD(+)-binding positions include 35 to 39 (DEVYD), 84 to 85 (SL), and Glu122. The N6-AMP-lysine intermediate role is filled by Lys124. 4 residues coordinate NAD(+): Arg145, Glu182, Lys308, and Lys332. Residues Cys426, Cys429, Cys444, and Cys449 each coordinate Zn(2+). The BRCT domain occupies 612–689 (TTEKSLNGKR…NETELIQMCR (78 aa)).

Belongs to the NAD-dependent DNA ligase family. LigA subfamily. It depends on Mg(2+) as a cofactor. Mn(2+) is required as a cofactor.

The enzyme catalyses NAD(+) + (deoxyribonucleotide)n-3'-hydroxyl + 5'-phospho-(deoxyribonucleotide)m = (deoxyribonucleotide)n+m + AMP + beta-nicotinamide D-nucleotide.. Functionally, DNA ligase that catalyzes the formation of phosphodiester linkages between 5'-phosphoryl and 3'-hydroxyl groups in double-stranded DNA using NAD as a coenzyme and as the energy source for the reaction. It is essential for DNA replication and repair of damaged DNA. The polypeptide is DNA ligase (Thermosynechococcus vestitus (strain NIES-2133 / IAM M-273 / BP-1)).